The chain runs to 387 residues: Trichocyst matrix protein T2-C (387 aa).

A signal peptide spans 1–19 (MKTIILALALIVLASSTQA). The propeptide occupies 20–48 (DVIATIKKIDQSPFGRTLFDTIWLELQTG). Residues 51-163 (LDRLLQTLTD…KVLEHQEATA (113 aa)) adopt a coiled-coil conformation. The propeptide occupies 184–239 (KGKATKQPAHKFTKEVASMIQKHFTTSAKKAAKFQHRKGYSKLFKAFATIASKVEQ). Residues 294 to 333 (TALANAQSDLAALNDVIAQVEASLDTTNQRIENVSADRND) are a coiled coil.

This sequence belongs to the TMP family. Post-translationally, two components are produced by post-translational processing from the precursor peptide.

It localises to the trichocyst. Its function is as follows. Structural protein that crystallize inside the trichocyst matrix. This Paramecium tetraurelia protein is Trichocyst matrix protein T2-C (T2C).